The chain runs to 548 residues: Glucose-6-phosphate isomerase (548 aa).

Residue Glu353 is the Proton donor of the active site. Active-site residues include His384 and Lys512.

The protein belongs to the GPI family.

The protein resides in the cytoplasm. It catalyses the reaction alpha-D-glucose 6-phosphate = beta-D-fructose 6-phosphate. It functions in the pathway carbohydrate biosynthesis; gluconeogenesis. Its pathway is carbohydrate degradation; glycolysis; D-glyceraldehyde 3-phosphate and glycerone phosphate from D-glucose: step 2/4. Functionally, catalyzes the reversible isomerization of glucose-6-phosphate to fructose-6-phosphate. This is Glucose-6-phosphate isomerase from Pseudoalteromonas translucida (strain TAC 125).